The following is a 1503-amino-acid chain: DNA-directed RNA polymerase subunit beta' (1503 aa).

Residues cysteine 71, cysteine 73, cysteine 86, and cysteine 89 each contribute to the Zn(2+) site. Mg(2+)-binding residues include aspartate 470, aspartate 472, and aspartate 474. Residues cysteine 800, cysteine 874, cysteine 881, and cysteine 884 each contribute to the Zn(2+) site.

It belongs to the RNA polymerase beta' chain family. In terms of assembly, the RNAP catalytic core consists of 2 alpha, 1 beta, 1 beta' and 1 omega subunit. When a sigma factor is associated with the core the holoenzyme is formed, which can initiate transcription. Requires Mg(2+) as cofactor. The cofactor is Zn(2+).

It catalyses the reaction RNA(n) + a ribonucleoside 5'-triphosphate = RNA(n+1) + diphosphate. In terms of biological role, DNA-dependent RNA polymerase catalyzes the transcription of DNA into RNA using the four ribonucleoside triphosphates as substrates. This chain is DNA-directed RNA polymerase subunit beta', found in Sulfurimonas denitrificans (strain ATCC 33889 / DSM 1251) (Thiomicrospira denitrificans (strain ATCC 33889 / DSM 1251)).